The following is an 83-amino-acid chain: UPF0346 protein M28_Spy0369 (83 aa).

This sequence belongs to the UPF0346 family.

This chain is UPF0346 protein M28_Spy0369, found in Streptococcus pyogenes serotype M28 (strain MGAS6180).